The following is a 497-amino-acid chain: Uridine 5'-monophosphate synthase (497 aa).

The OPRTase stretch occupies residues 8–226; that stretch reads TRNGALKRNL…KLEINSELEN (219 aa). The interval 227-232 is domain linker; the sequence is LSSLPY. Residues 233–496 form an OMPdecase region; that stretch reads VENVRTPLAE…WDALTRSDDS (264 aa). Residues D271 and 293–295 contribute to the UMP site; that span reads KLH. Residue K293 coordinates orotidine 5'-phosphate. Catalysis depends on for OMPdecase activity residues D324, K326, and D329. Orotidine 5'-phosphate contacts are provided by residues K326, D329, T333, S387, 446–448, and 466–467; these read QQW and GR. Residues D329, T333, S387, 446–448, and 466–467 contribute to the UMP site; these read QQW and GR.

It in the N-terminal section; belongs to the purine/pyrimidine phosphoribosyltransferase family. The protein in the C-terminal section; belongs to the OMP decarboxylase family. In terms of tissue distribution, expressed in intestine and in neurons near the nerve ring and rectum.

It localises to the cytoplasm. The catalysed reaction is orotidine 5'-phosphate + diphosphate = orotate + 5-phospho-alpha-D-ribose 1-diphosphate. It catalyses the reaction orotidine 5'-phosphate + H(+) = UMP + CO2. It functions in the pathway pyrimidine metabolism; UMP biosynthesis via de novo pathway; UMP from orotate: step 1/2. The protein operates within pyrimidine metabolism; UMP biosynthesis via de novo pathway; UMP from orotate: step 2/2. Its function is as follows. Bifunctional enzyme which catalyzes the formation of UMP from orotate in the de novo pathway of pyrimidine biosynthesis. May also form UMP from uracil. Regulates the size of gut granules during embryonic development. Involved in resistance to DNA damaging agents including UV-C and X-ray radiation. This chain is Uridine 5'-monophosphate synthase, found in Caenorhabditis elegans.